We begin with the raw amino-acid sequence, 265 residues long: L-histidine 2-aminobutanoyltransferase (265 aa).

The protein belongs to the methyltransferase superfamily. CntL family.

It catalyses the reaction L-histidine + S-adenosyl-L-methionine = (2S)-2-amino-4-{[(1S)-1-carboxy-2-(1H-imidazol-4-yl)ethyl]amino}butanoate + S-methyl-5'-thioadenosine + H(+). Its function is as follows. Catalyzes the nucleophilic attack of one alpha-aminobutanoate moiety from SAM onto L-histidine to produce the intermediate (2S)-2-amino-4-{[(1S)-1-carboxy-2-(1H-imidazol-4-yl)ethyl]amino}butanoate. Functions in the biosynthesis of the metallophore yersinopine, which is involved in metal acquisition and thus enables bacterial growth inside the host, where metal access is limited. Therefore, this enzyme probably contributes to Yersinia virulence. This is L-histidine 2-aminobutanoyltransferase from Yersinia pestis.